The chain runs to 501 residues: UDP-N-acetylmuramoyl-L-alanyl-D-glutamate--2,6-diaminopimelate ligase (501 aa).

Residue S29 participates in UDP-N-acetyl-alpha-D-muramoyl-L-alanyl-D-glutamate binding. 112 to 118 (GTNGKTS) is a binding site for ATP. Residues 161–162 (TT), S188, and R196 contribute to the UDP-N-acetyl-alpha-D-muramoyl-L-alanyl-D-glutamate site. K228 is modified (N6-carboxylysine). Residues R393, 417 to 420 (DNPR), G468, and E472 contribute to the meso-2,6-diaminopimelate site. The short motif at 417–420 (DNPR) is the Meso-diaminopimelate recognition motif element.

It belongs to the MurCDEF family. MurE subfamily. Requires Mg(2+) as cofactor. Carboxylation is probably crucial for Mg(2+) binding and, consequently, for the gamma-phosphate positioning of ATP.

It is found in the cytoplasm. The enzyme catalyses UDP-N-acetyl-alpha-D-muramoyl-L-alanyl-D-glutamate + meso-2,6-diaminopimelate + ATP = UDP-N-acetyl-alpha-D-muramoyl-L-alanyl-gamma-D-glutamyl-meso-2,6-diaminopimelate + ADP + phosphate + H(+). Its pathway is cell wall biogenesis; peptidoglycan biosynthesis. Catalyzes the addition of meso-diaminopimelic acid to the nucleotide precursor UDP-N-acetylmuramoyl-L-alanyl-D-glutamate (UMAG) in the biosynthesis of bacterial cell-wall peptidoglycan. In Acidovorax sp. (strain JS42), this protein is UDP-N-acetylmuramoyl-L-alanyl-D-glutamate--2,6-diaminopimelate ligase.